The sequence spans 520 residues: Ribonuclease Y (520 aa).

Residues 4–24 (TVWILISILLATVGAVVGFFV) form a helical membrane-spanning segment. Positions 210-273 (TVSVVNLPND…ETARIALDKL (64 aa)) constitute a KH domain. Positions 336–429 (VLKHSMEVAY…VAAADALSAA (94 aa)) constitute an HD domain.

It belongs to the RNase Y family.

It localises to the cell membrane. In terms of biological role, endoribonuclease that initiates mRNA decay. The protein is Ribonuclease Y of Bacillus cereus (strain ZK / E33L).